Here is a 177-residue protein sequence, read N- to C-terminus: Large ribosomal subunit protein uL6 (177 aa).

This sequence belongs to the universal ribosomal protein uL6 family. Part of the 50S ribosomal subunit.

Its function is as follows. This protein binds to the 23S rRNA, and is important in its secondary structure. It is located near the subunit interface in the base of the L7/L12 stalk, and near the tRNA binding site of the peptidyltransferase center. The chain is Large ribosomal subunit protein uL6 from Beijerinckia indica subsp. indica (strain ATCC 9039 / DSM 1715 / NCIMB 8712).